We begin with the raw amino-acid sequence, 212 residues long: UPF0319 protein PBPRA2789 (212 aa).

The N-terminal stretch at 1 to 21 (MKKILLAFTLPLVLASQTAMA) is a signal peptide.

This sequence belongs to the UPF0319 family.

This is UPF0319 protein PBPRA2789 from Photobacterium profundum (strain SS9).